A 78-amino-acid polypeptide reads, in one-letter code: Small ribosomal subunit protein bS18A (78 aa).

Belongs to the bacterial ribosomal protein bS18 family. In terms of assembly, part of the 30S ribosomal subunit. Forms a tight heterodimer with protein bS6.

Binds as a heterodimer with protein bS6 to the central domain of the 16S rRNA, where it helps stabilize the platform of the 30S subunit. This chain is Small ribosomal subunit protein bS18A, found in Streptomyces avermitilis (strain ATCC 31267 / DSM 46492 / JCM 5070 / NBRC 14893 / NCIMB 12804 / NRRL 8165 / MA-4680).